Reading from the N-terminus, the 281-residue chain is 1-acyl-sn-glycerol-3-phosphate acyltransferase (281 aa).

3 helical membrane passes run 40–60, 71–91, and 110–130; these read IFVC…IMVL, LGNL…GIPI, and ASPI…VGVA. An HXXXXD motif motif is present at residues 109–114; sequence HASPID.

The protein belongs to the 1-acyl-sn-glycerol-3-phosphate acyltransferase family.

The protein localises to the membrane. It carries out the reaction a 1-acyl-sn-glycero-3-phosphate + an acyl-CoA = a 1,2-diacyl-sn-glycero-3-phosphate + CoA. It functions in the pathway phospholipid metabolism; CDP-diacylglycerol biosynthesis; CDP-diacylglycerol from sn-glycerol 3-phosphate: step 2/3. In terms of biological role, converts lysophosphatidic acid (LPA) into phosphatidic acid by incorporating acyl moiety at the 2 position. This enzyme uses erucoyl-CoA as an acyl donor. The sequence is that of 1-acyl-sn-glycerol-3-phosphate acyltransferase (PLSC) from Limnanthes douglasii (Douglas' meadowfoam).